A 281-amino-acid polypeptide reads, in one-letter code: Acetyl-coenzyme A carboxylase carboxyl transferase subunit beta (281 aa).

Residues 1-23 (MAWFKREKKGISTSTEEKKEAPD) are disordered. The CoA carboxyltransferase N-terminal domain maps to 25-281 (LWNKCPNCKK…LAAFLKMMKN (257 aa)). Zn(2+) contacts are provided by C29, C32, C48, and C51. The segment at 29 to 51 (CPNCKKALHSADLLENKYVCQYC) adopts a C4-type zinc-finger fold.

This sequence belongs to the AccD/PCCB family. In terms of assembly, acetyl-CoA carboxylase is a heterohexamer composed of biotin carboxyl carrier protein (AccB), biotin carboxylase (AccC) and two subunits each of ACCase subunit alpha (AccA) and ACCase subunit beta (AccD). Zn(2+) serves as cofactor.

It localises to the cytoplasm. The enzyme catalyses N(6)-carboxybiotinyl-L-lysyl-[protein] + acetyl-CoA = N(6)-biotinyl-L-lysyl-[protein] + malonyl-CoA. It functions in the pathway lipid metabolism; malonyl-CoA biosynthesis; malonyl-CoA from acetyl-CoA: step 1/1. Its function is as follows. Component of the acetyl coenzyme A carboxylase (ACC) complex. Biotin carboxylase (BC) catalyzes the carboxylation of biotin on its carrier protein (BCCP) and then the CO(2) group is transferred by the transcarboxylase to acetyl-CoA to form malonyl-CoA. This is Acetyl-coenzyme A carboxylase carboxyl transferase subunit beta from Pedobacter heparinus (strain ATCC 13125 / DSM 2366 / CIP 104194 / JCM 7457 / NBRC 12017 / NCIMB 9290 / NRRL B-14731 / HIM 762-3).